The sequence spans 400 residues: Tryptophan synthase beta chain (400 aa).

K92 is subject to N6-(pyridoxal phosphate)lysine.

This sequence belongs to the TrpB family. In terms of assembly, tetramer of two alpha and two beta chains. Pyridoxal 5'-phosphate serves as cofactor.

The enzyme catalyses (1S,2R)-1-C-(indol-3-yl)glycerol 3-phosphate + L-serine = D-glyceraldehyde 3-phosphate + L-tryptophan + H2O. Its pathway is amino-acid biosynthesis; L-tryptophan biosynthesis; L-tryptophan from chorismate: step 5/5. In terms of biological role, the beta subunit is responsible for the synthesis of L-tryptophan from indole and L-serine. The sequence is that of Tryptophan synthase beta chain from Leptospira borgpetersenii serovar Hardjo-bovis (strain JB197).